Reading from the N-terminus, the 203-residue chain is FMN-dependent NADH:quinone oxidoreductase (203 aa).

FMN contacts are provided by residues serine 9 and 15 to 17; that span reads SKS.

This sequence belongs to the azoreductase type 1 family. In terms of assembly, homodimer. FMN is required as a cofactor.

It carries out the reaction 2 a quinone + NADH + H(+) = 2 a 1,4-benzosemiquinone + NAD(+). The enzyme catalyses N,N-dimethyl-1,4-phenylenediamine + anthranilate + 2 NAD(+) = 2-(4-dimethylaminophenyl)diazenylbenzoate + 2 NADH + 2 H(+). In terms of biological role, quinone reductase that provides resistance to thiol-specific stress caused by electrophilic quinones. Also exhibits azoreductase activity. Catalyzes the reductive cleavage of the azo bond in aromatic azo compounds to the corresponding amines. The sequence is that of FMN-dependent NADH:quinone oxidoreductase from Bordetella avium (strain 197N).